The primary structure comprises 828 residues: DNA gyrase subunit A (828 aa).

A Topo IIA-type catalytic domain is found at 38 to 501; sequence LPDARDGLKP…SYESIDTEDL (464 aa). Catalysis depends on Tyr126, which acts as the O-(5'-phospho-DNA)-tyrosine intermediate. The GyrA-box signature appears at 528-534; it reads QNRGGKG.

This sequence belongs to the type II topoisomerase GyrA/ParC subunit family. As to quaternary structure, heterotetramer, composed of two GyrA and two GyrB chains. In the heterotetramer, GyrA contains the active site tyrosine that forms a transient covalent intermediate with DNA, while GyrB binds cofactors and catalyzes ATP hydrolysis.

It localises to the cytoplasm. It carries out the reaction ATP-dependent breakage, passage and rejoining of double-stranded DNA.. Its function is as follows. A type II topoisomerase that negatively supercoils closed circular double-stranded (ds) DNA in an ATP-dependent manner to modulate DNA topology and maintain chromosomes in an underwound state. Negative supercoiling favors strand separation, and DNA replication, transcription, recombination and repair, all of which involve strand separation. Also able to catalyze the interconversion of other topological isomers of dsDNA rings, including catenanes and knotted rings. Type II topoisomerases break and join 2 DNA strands simultaneously in an ATP-dependent manner. In Helicobacter pylori (strain J99 / ATCC 700824) (Campylobacter pylori J99), this protein is DNA gyrase subunit A.